Reading from the N-terminus, the 421-residue chain is Subtilisin-like protease 2 (421 aa).

A signal peptide spans 1–16; that stretch reads MQLLNFGLLLLPFVAG. Residues 17–122 constitute a propeptide that is removed on maturation; sequence DLAPQPEPLL…VHPDQHFYLA (106 aa). The region spanning 36 to 121 is the Inhibitor I9 domain; that stretch reads QYLVTLKEGL…SVHPDQHFYL (86 aa). Positions 131–421 constitute a Peptidase S8 domain; it reads RWGLGYMSSK…ERKCKLPKYY (291 aa). Catalysis depends on Asp-169, which acts as the Charge relay system. N-linked (GlcNAc...) asparagine glycosylation is present at Asn-192. Catalysis depends on His-201, which acts as the Charge relay system. N-linked (GlcNAc...) asparagine glycans are attached at residues Asn-248, Asn-261, and Asn-348. Ser-357 (charge relay system) is an active-site residue. Residue Asn-388 is glycosylated (N-linked (GlcNAc...) asparagine).

It belongs to the peptidase S8 family.

The protein resides in the secreted. Secreted subtilisin-like serine protease with keratinolytic activity that contributes to pathogenicity. In Trichophyton rubrum (Athlete's foot fungus), this protein is Subtilisin-like protease 2 (SUB2).